The chain runs to 136 residues: Protein NrdI (136 aa).

It belongs to the NrdI family.

In terms of biological role, probably involved in ribonucleotide reductase function. This chain is Protein NrdI, found in Salmonella agona (strain SL483).